The chain runs to 325 residues: GMP reductase (325 aa).

The active-site Thioimidate intermediate is the Cys-174. 203–226 is an NADP(+) binding site; that stretch reads IIADGGIRTHGDIAKSVRFGATMV.

The protein belongs to the IMPDH/GMPR family. GuaC type 2 subfamily.

It carries out the reaction IMP + NH4(+) + NADP(+) = GMP + NADPH + 2 H(+). Functionally, catalyzes the irreversible NADPH-dependent deamination of GMP to IMP. It functions in the conversion of nucleobase, nucleoside and nucleotide derivatives of G to A nucleotides, and in maintaining the intracellular balance of A and G nucleotides. This chain is GMP reductase, found in Enterococcus faecalis (strain ATCC 700802 / V583).